Here is a 968-residue protein sequence, read N- to C-terminus: MAGRNIEKMASIDAQLRQLVPAKVSEDDKLVEYDALLLDRFLDILQDLHGEDLRETVQELYELSAEYEGKREPSKLEELGSVLTSLDPGDSIVISKAFSHMLNLANLAEEVQIAHRRRIKKLKKGDFVDESSATTESDIEETFKRLVSDLGKSPEEIFDALKNQTVDLVLTAHPTQSVRRSLLQKHGRIRDCLAQLYAKDITPDDKQELDESLQREIQAAFRTDEIRRTPPTPQDEMRAGMSYFHETIWKGVPKFLRRVDTALKNIGIDERVPYNAPLIQFSSWMGGDRDGNPRVTPEVTRDVCLLARMMAANLYYNQIENLMFELSMWRCTDEFRVRADELHRNSRKDAAKHYIEFWKTIPPTEPYRVILGDVRDKLYHTRERSRQLLSNGISDIPEEATFTNVEQFLEPLELCYRSLCSCGDSPIADGSLLDFLRQVSTFGLSLVRLDIRQESERHTDVLDAITKHLDIGSSYRDWSEEGRQEWLLAELSGKRPLFGPDLPKTEEISDVLDTFKVISELPSDCFGAYIISMATSPSDVLAVELLQRECHVKNPLRVVPLFEKLADLEAAPAAVARLFSIDWYKNRINGKQEVMIGYSDSGKDAGRLSAAWELYKAQEELVKVAKKYGVKLTMFHGRGGTVGRGGGPTHLAILSQPPDTVNGSLRVTVQGEVIEQSFGEAHLCFRTLQRFTAATLEHGMNPPISPKPEWRALLDEMAVVATEEYRSVVFQEPRFVEYFRLATPELEYGRMNIGSRPSKRKPSGGIESLRAIPWIFAWTQTRFHLPVWLGFGAAFRYAIKKDVRNLHMLQDMYKQWPFFRVTIDLIEMVFAKGDPGIAALYDKLLVSEDLWAFGEKLRANFDETKNLVLQTAGHKDLLEGDPYLKQRLRLRDSYITTLNVCQAYTLKRIRDANYNVTLRPHISKEIMQSSKSAQELVKLNPTSEYAPGLEDTLILTMKGIAAGLQNTG.

Position 11 is a phosphoserine (serine 11). Active-site residues include histidine 173 and lysine 603. A Phosphoserine modification is found at serine 705.

Belongs to the PEPCase type 1 family. As to quaternary structure, homotetramer. Mg(2+) is required as a cofactor. In terms of tissue distribution, expressed in roots and siliques, and to a lower extent in stems, leaves and flowers.

Its subcellular location is the cytoplasm. It carries out the reaction oxaloacetate + phosphate = phosphoenolpyruvate + hydrogencarbonate. Its activity is regulated as follows. By light-reversible phosphorylation. Its function is as follows. Through the carboxylation of phosphoenolpyruvate (PEP) it forms oxaloacetate, a four-carbon dicarboxylic acid source for the tricarboxylic acid cycle. The protein is Phosphoenolpyruvate carboxylase 3 (PPC3) of Arabidopsis thaliana (Mouse-ear cress).